The chain runs to 907 residues: Clathrin coat assembly protein AP180 (907 aa).

An ENTH domain is found at 14–145 (QYSVTGSAVA…FSYRQMAFDF (132 aa)). Disordered regions lie at residues 285 to 326 (LEGK…DTSP), 342 to 380 (TSKP…TAWG), 393 to 414 (SVPS…PTTT), and 505 to 525 (VPVV…APSP). S296, S300, and S306 each carry phosphoserine. Residues 302–324 (LSKSSPATTVTSPNSTPAKTIDT) are compositionally biased toward polar residues. An O-linked (GlcNAc) threonine glycan is attached at T310. S313 carries the phosphoserine modification. T317 carries the post-translational modification Phosphothreonine. The segment covering 505–515 (VPVVTPTASTA) has biased composition (low complexity). The segment covering 516 to 525 (PPVPATAPSP) has biased composition (pro residues). S596, S602, S623, S629, and S763 each carry phosphoserine. R865 is modified (asymmetric dimethylarginine; alternate). At R865 the chain carries Omega-N-methylarginine; alternate. Positions 867–907 (PFGAAAVPGTQLSPSPTPASQSPKKPPAKDPLADLNIKDFL) are disordered. A compositionally biased stretch (basic and acidic residues) spans 893–907 (PAKDPLADLNIKDFL).

Belongs to the PICALM/SNAP91 family. In terms of assembly, binds AP2A2. Interacts with AP2B1; clathrin competes with SNAP91. Thr-310 can be modified by the addition of N-acetylglucosamine which can be further phosphorylated. There is no evidence for direct Thr-310 phosphorylation.

The protein resides in the cell membrane. Its subcellular location is the membrane. It localises to the coated pit. Functionally, adaptins are components of the adapter complexes which link clathrin to receptors in coated vesicles. Clathrin-associated protein complexes are believed to interact with the cytoplasmic tails of membrane proteins, leading to their selection and concentration. Binding of AP180 to clathrin triskelia induces their assembly into 60-70 nm coats. The sequence is that of Clathrin coat assembly protein AP180 (SNAP91) from Homo sapiens (Human).